An 89-amino-acid polypeptide reads, in one-letter code: MALTQERKREIIEQFKVHENDTGSPEVQIAILTEQINNLNEHLRVHKKDHHSRRGLLKMVGKRRRLLAYLRNKDVARYREIVEKLGLRR.

This sequence belongs to the universal ribosomal protein uS15 family. Part of the 30S ribosomal subunit. Forms a bridge to the 50S subunit in the 70S ribosome, contacting the 23S rRNA.

In terms of biological role, one of the primary rRNA binding proteins, it binds directly to 16S rRNA where it helps nucleate assembly of the platform of the 30S subunit by binding and bridging several RNA helices of the 16S rRNA. Its function is as follows. Forms an intersubunit bridge (bridge B4) with the 23S rRNA of the 50S subunit in the ribosome. The chain is Small ribosomal subunit protein uS15 from Geobacillus stearothermophilus (Bacillus stearothermophilus).